The primary structure comprises 203 residues: Nascent polypeptide-associated complex subunit alpha-like protein 1 (203 aa).

Basic and acidic residues predominate over residues 1–23 (MTTEEKEILAAKLEEQKIDLDKP). Residues 1–71 (MTTEEKEILA…SEKKSRKAML (71 aa)) form a disordered region. Residues 24 to 50 (EVEDDDDNEDDDSDDDDKDDDEADGLD) are compositionally biased toward acidic residues. Ser-36 is modified (phosphoserine). One can recognise an NAC-A/B domain in the interval 60-125 (SRSEKKSRKA…AKIEDLSSQI (66 aa)). Residues 158-203 (EVDEEGVEPKDIELVMTQAGVSRPNAVKALKAADGDIVSAIMELTT) form the UBA domain.

It belongs to the NAC-alpha family.

May promote appropriate targeting of ribosome-nascent polypeptide complexes. The sequence is that of Nascent polypeptide-associated complex subunit alpha-like protein 1 from Arabidopsis thaliana (Mouse-ear cress).